The chain runs to 202 residues: ATP-dependent Clp protease proteolytic subunit (202 aa).

Catalysis depends on Ser-101, which acts as the Nucleophile. The active site involves His-126.

The protein belongs to the peptidase S14 family. In terms of assembly, component of the chloroplastic Clp protease core complex.

The protein resides in the plastid. Its subcellular location is the chloroplast stroma. The enzyme catalyses Hydrolysis of proteins to small peptides in the presence of ATP and magnesium. alpha-casein is the usual test substrate. In the absence of ATP, only oligopeptides shorter than five residues are hydrolyzed (such as succinyl-Leu-Tyr-|-NHMec, and Leu-Tyr-Leu-|-Tyr-Trp, in which cleavage of the -Tyr-|-Leu- and -Tyr-|-Trp bonds also occurs).. Functionally, cleaves peptides in various proteins in a process that requires ATP hydrolysis. Has a chymotrypsin-like activity. Plays a major role in the degradation of misfolded proteins. The chain is ATP-dependent Clp protease proteolytic subunit from Buxus microphylla (Littleleaf boxwood).